The sequence spans 446 residues: Tubulin alpha chain-like 3 (446 aa).

Positions 1–4 (MREC) match the MREC motif motif. Glutamine 11, glutamate 78, serine 147, glycine 151, threonine 152, threonine 186, asparagine 213, and asparagine 235 together coordinate GTP. Glutamate 78 contacts Mg(2+). Glutamate 261 is a catalytic residue.

The protein belongs to the tubulin family. In terms of assembly, dimer of alpha and beta chains. A typical microtubule is a hollow water-filled tube with an outer diameter of 25 nm and an inner diameter of 15 nM. Alpha-beta heterodimers associate head-to-tail to form protofilaments running lengthwise along the microtubule wall with the beta-tubulin subunit facing the microtubule plus end conferring a structural polarity. Microtubules usually have 13 protofilaments but different protofilament numbers can be found in some organisms and specialized cells. Mg(2+) is required as a cofactor. Some glutamate residues at the C-terminus are polyglutamylated, resulting in polyglutamate chains on the gamma-carboxyl group. Polyglutamylation plays a key role in microtubule severing by spastin (SPAST). SPAST preferentially recognizes and acts on microtubules decorated with short polyglutamate tails: severing activity by SPAST increases as the number of glutamates per tubulin rises from one to eight, but decreases beyond this glutamylation threshold. Glutamylation is also involved in cilia motility. Post-translationally, some glutamate residues at the C-terminus are monoglycylated but not polyglycylated due to the absence of functional TTLL10 in human. Monoglycylation is mainly limited to tubulin incorporated into cilia and flagella axonemes, which is required for their stability and maintenance. Flagella glycylation controls sperm motility. Both polyglutamylation and monoglycylation can coexist on the same protein on adjacent residues, and lowering glycylation levels increases polyglutamylation, and reciprocally.

It is found in the cytoplasm. Its subcellular location is the cytoskeleton. The catalysed reaction is GTP + H2O = GDP + phosphate + H(+). In terms of biological role, tubulin is the major constituent of microtubules, a cylinder consisting of laterally associated linear protofilaments composed of alpha- and beta-tubulin heterodimers. Microtubules grow by the addition of GTP-tubulin dimers to the microtubule end, where a stabilizing cap forms. Below the cap, tubulin dimers are in GDP-bound state, owing to GTPase activity of alpha-tubulin. The sequence is that of Tubulin alpha chain-like 3 (TUBAL3) from Homo sapiens (Human).